Reading from the N-terminus, the 247-residue chain is MNVLPCSMNTLKGLYEISGVEVGQHFYWQIGGFQIHAQVLITSWVVIAILLGSAAIAVRNPQTIPTDGQNFFEYVLEFIRDLSKTQIGEDYGPWVPFIGTMFLFIFVSNWSGALLPWKIIQLPHGELAAPTNDINTTVALALLTSAAYFYAGLTKKGLGYFGKYIQPTPILLPINILEDFTKPLSLSFRLFGNILADELVVVVLVSLVPLVVPIPVMFLGLFTSGIQALIFATLAAAYIGESMEGHH.

5 consecutive transmembrane segments (helical) span residues 38 to 58 (QVLI…AIAV), 95 to 115 (VPFI…GALL), 134 to 154 (INTT…AGLT), 199 to 219 (LVVV…VMFL), and 220 to 240 (GLFT…AYIG).

It belongs to the ATPase A chain family. In terms of assembly, F-type ATPases have 2 components, CF(1) - the catalytic core - and CF(0) - the membrane proton channel. CF(1) has five subunits: alpha(3), beta(3), gamma(1), delta(1), epsilon(1). CF(0) has four main subunits: a, b, b' and c.

The protein localises to the plastid. The protein resides in the chloroplast thylakoid membrane. Its function is as follows. Key component of the proton channel; it plays a direct role in the translocation of protons across the membrane. The polypeptide is ATP synthase subunit a, chloroplastic (Ceratophyllum demersum (Rigid hornwort)).